The primary structure comprises 503 residues: MFWADAAVKDLIGEQRISTGISPSGPIHVGNMREILTGDILYKAVIKRGLKSDFIYLCDDMDPLRKVYPFLDQSYSKYVGFPLKNIPSPDGVGVYSDHFLNPFIEVMRKTGIPARVIKTSDLYGNGILADAIDTVMERRSEIKDILEKITGRMIEGDFYPYEPLCEKCGRINSTSVISYKYPYAEYTCKCGHHGFADIRRAEGKMPWRIEWPAKWYALKVSIEPFGKDHGAPGGSYDTGKRIAREIFGIEPPLPLVYERIMLKGKGAMHSSTGLAIPASEIIDVMPPELLRFLIARVNPSRHIDFDPGLGLLNLFDEFERYLNKYREGDIDGDSKAIIEYSLIEKEKLSYPIDFRHLITLIQIYQKKEDILRAAMASTKDQLDESALYDEIKYAKNWLERYAPDNVKFKLLAIDEKAELSDQDRAILSKFLEVSNSMAWDSNEIHSTVHNVAKDLGIGPDAAFSTFYKVFIGKERGPRLGYFLFNLGKDFTIARIKSVLGGNS.

Positions 23-31 (PSGPIHVGN) match the 'HIGH' region motif. The short motif at 267–271 (AMHSS) is the 'KMSKS' region element.

The protein belongs to the class-I aminoacyl-tRNA synthetase family.

The protein resides in the cytoplasm. It carries out the reaction tRNA(Lys) + L-lysine + ATP = L-lysyl-tRNA(Lys) + AMP + diphosphate. This is Lysine--tRNA ligase from Thermoplasma volcanium (strain ATCC 51530 / DSM 4299 / JCM 9571 / NBRC 15438 / GSS1).